A 1043-amino-acid polypeptide reads, in one-letter code: F-box DNA helicase 1 (1043 aa).

A disordered region spans residues 30-56 (QRWTNRDPNHGLYPKPRTKRGSRGQGS). The PIP-box motif lies at 57 to 64 (QRCIPEFF). Residues 101–191 (CALPQEGSAG…QDAGDVGPDP (91 aa)) form a disordered region. Ser124 carries the post-translational modification Phosphoserine. The F-box domain occupies 138–184 (SRWDGVSKKAPRHHLSVPCTRPREARQEAEDSTSRLSAESGETDQDA). Positions 158–170 (RPREARQEAEDST) are enriched in basic and acidic residues. The 264-residue stretch at 442-705 (THEQQLILNH…FYLTQSFRFG (264 aa)) folds into the UvrD-like helicase ATP-binding domain. 463-470 (AFAGTGKT) contributes to the ATP binding site. The short motif at 807-811 (KFIRR) is the APIM motif element.

This sequence belongs to the helicase family. UvrD subfamily. Part of the SCF (SKP1-CUL1-F-box) E3 ubiquitin-protein ligase complex SCF(FBH1) composed of CUL1, SKP1, RBX1 and FBH1. Interacts with RAD51. Interacts with RPA2. Interacts (via PIP-box and RanBP2-type zinc finger) with PCNA. Post-translationally, ubiquitinated. Ubiquitination by the DCX(DTL) complex, also named CRL4(CDT2), leading to its degradation: ubiquitination takes place after its localization to DNA damage sites, possibly to facilitate the translesion synthesis (TLS) pathway.

The protein localises to the nucleus. The protein resides in the chromosome. It catalyses the reaction Couples ATP hydrolysis with the unwinding of duplex DNA by translocating in the 3'-5' direction.. The catalysed reaction is ATP + H2O = ADP + phosphate + H(+). The protein operates within protein modification; protein ubiquitination. 3'-5' DNA helicase and substrate-recognition component of the SCF(FBH1) E3 ubiquitin ligase complex that plays a key role in response to stalled/damaged replication forks. Involved in genome maintenance by acting as an anti-recombinogenic helicase and preventing extensive strand exchange during homologous recombination: promotes RAD51 filament dissolution from stalled forks, thereby inhibiting homologous recombination and preventing excessive recombination. Also promotes cell death and DNA double-strand breakage in response to replication stress: together with MUS81, promotes the endonucleolytic DNA cleavage following prolonged replication stress via its helicase activity, possibly to eliminate cells with excessive replication stress. Plays a major role in remodeling of stalled DNA forks by catalyzing fork regression, in which the fork reverses and the two nascent DNA strands anneal. In addition to the helicase activity, also acts as the substrate-recognition component of the SCF(FBH1) E3 ubiquitin ligase complex, a complex that mediates ubiquitination of RAD51, leading to regulate RAD51 subcellular location. The protein is F-box DNA helicase 1 of Homo sapiens (Human).